A 262-amino-acid polypeptide reads, in one-letter code: Indole-3-glycerol phosphate synthase (262 aa).

Belongs to the TrpC family.

The catalysed reaction is 1-(2-carboxyphenylamino)-1-deoxy-D-ribulose 5-phosphate + H(+) = (1S,2R)-1-C-(indol-3-yl)glycerol 3-phosphate + CO2 + H2O. It functions in the pathway amino-acid biosynthesis; L-tryptophan biosynthesis; L-tryptophan from chorismate: step 4/5. The sequence is that of Indole-3-glycerol phosphate synthase from Bordetella petrii (strain ATCC BAA-461 / DSM 12804 / CCUG 43448).